We begin with the raw amino-acid sequence, 422 residues long: Lipoyl synthase, mitochondrial (422 aa).

A mitochondrion-targeting transit peptide spans 1–34 (MAASSTRLRCLYASSAPAWKKSPSQSIISLSRHY). A compositionally biased stretch (polar residues) spans 37–48 (TSSTTPSLNPDE). Residues 37 to 70 (TSSTTPSLNPDESSSSSSSTIPKRRKTTTFRDKL) form a disordered region. [4Fe-4S] cluster-binding residues include Cys-146, Cys-151, Cys-157, Cys-177, Cys-181, Cys-184, and Ser-383. Residues 160–372 (GSDKSAATAT…RQRALEMGFL (213 aa)) form the Radical SAM core domain.

The protein belongs to the radical SAM superfamily. Lipoyl synthase family. It depends on [4Fe-4S] cluster as a cofactor.

The protein resides in the mitochondrion. The enzyme catalyses [[Fe-S] cluster scaffold protein carrying a second [4Fe-4S](2+) cluster] + N(6)-octanoyl-L-lysyl-[protein] + 2 oxidized [2Fe-2S]-[ferredoxin] + 2 S-adenosyl-L-methionine + 4 H(+) = [[Fe-S] cluster scaffold protein] + N(6)-[(R)-dihydrolipoyl]-L-lysyl-[protein] + 4 Fe(3+) + 2 hydrogen sulfide + 2 5'-deoxyadenosine + 2 L-methionine + 2 reduced [2Fe-2S]-[ferredoxin]. The protein operates within protein modification; protein lipoylation via endogenous pathway; protein N(6)-(lipoyl)lysine from octanoyl-[acyl-carrier-protein]: step 2/2. Catalyzes the radical-mediated insertion of two sulfur atoms into the C-6 and C-8 positions of the octanoyl moiety bound to the lipoyl domains of lipoate-dependent enzymes, thereby converting the octanoylated domains into lipoylated derivatives. The sequence is that of Lipoyl synthase, mitochondrial from Talaromyces stipitatus (strain ATCC 10500 / CBS 375.48 / QM 6759 / NRRL 1006) (Penicillium stipitatum).